We begin with the raw amino-acid sequence, 503 residues long: ATP-dependent RNA helicase dbp3 (503 aa).

Basic and acidic residues predominate over residues 1–13 (MGKRVSHNEGADR). The segment at 1-37 (MGKRVSHNEGADRRPKKKAKNEKPEKETMESPAADVT) is disordered. Positions 104-112 (SFASPTPIQ) match the Q motif motif. Residues 116 to 292 (WPLLFAGRDV…ATFMTSAVTV (177 aa)) form the Helicase ATP-binding domain. Residue 129–136 (AETGSGKT) participates in ATP binding. The short motif at 239-242 (DEAD) is the DEAD box element. A Helicase C-terminal domain is found at 323 to 472 (RLVQLLSENQ…EVPQELLKFG (150 aa)).

This sequence belongs to the DEAD box helicase family. DDX5/DBP2 subfamily.

It is found in the nucleus. The protein resides in the nucleolus. The enzyme catalyses ATP + H2O = ADP + phosphate + H(+). In terms of biological role, ATP-dependent RNA helicase required for 60S ribosomal subunit synthesis. Involved in efficient pre-rRNA processing, predominantly at site A3, which is necessary for the normal formation of 25S and 5.8S rRNAs. This chain is ATP-dependent RNA helicase dbp3 (dbp3), found in Aspergillus clavatus (strain ATCC 1007 / CBS 513.65 / DSM 816 / NCTC 3887 / NRRL 1 / QM 1276 / 107).